A 445-amino-acid chain; its full sequence is tRNA-2-methylthio-N(6)-dimethylallyladenosine synthase (445 aa).

The 118-residue stretch at 4–121 folds into the MTTase N-terminal domain; that stretch reads NKIYIKTWGC…LPNMIQEVKK (118 aa). 6 residues coordinate [4Fe-4S] cluster: Cys13, Cys50, Cys84, Cys158, Cys162, and Cys165. A Radical SAM core domain is found at 144 to 376; it reads RKPKVTAFVS…QTLIRNNTTM (233 aa). Residues 379–442 enclose the TRAM domain; it reads QKMLGSIQSV…PNSLRGSYEK (64 aa).

Belongs to the methylthiotransferase family. MiaB subfamily. Monomer. [4Fe-4S] cluster serves as cofactor.

The protein resides in the cytoplasm. The enzyme catalyses N(6)-dimethylallyladenosine(37) in tRNA + (sulfur carrier)-SH + AH2 + 2 S-adenosyl-L-methionine = 2-methylsulfanyl-N(6)-dimethylallyladenosine(37) in tRNA + (sulfur carrier)-H + 5'-deoxyadenosine + L-methionine + A + S-adenosyl-L-homocysteine + 2 H(+). In terms of biological role, catalyzes the methylthiolation of N6-(dimethylallyl)adenosine (i(6)A), leading to the formation of 2-methylthio-N6-(dimethylallyl)adenosine (ms(2)i(6)A) at position 37 in tRNAs that read codons beginning with uridine. This is tRNA-2-methylthio-N(6)-dimethylallyladenosine synthase from Buchnera aphidicola subsp. Baizongia pistaciae (strain Bp).